We begin with the raw amino-acid sequence, 81 residues long: Cytochrome b559 subunit alpha (81 aa).

Residues Arg18 and His23 each coordinate heme. Residues 19-40 (YWVIHSITIPMLFIAGWLFVST) form a helical membrane-spanning segment.

The protein belongs to the PsbE/PsbF family. In terms of assembly, heterodimer of an alpha subunit and a beta subunit. PSII is composed of 1 copy each of membrane proteins PsbA, PsbB, PsbC, PsbD, PsbE, PsbF, PsbH, PsbI, PsbJ, PsbK, PsbL, PsbM, PsbT, PsbX, PsbY, PsbZ, Psb30/Ycf12, peripheral proteins PsbO, CyanoQ (PsbQ), PsbU, PsbV and a large number of cofactors. It forms dimeric complexes. Heme b serves as cofactor.

It is found in the cellular thylakoid membrane. Functionally, this b-type cytochrome is tightly associated with the reaction center of photosystem II (PSII). PSII is a light-driven water:plastoquinone oxidoreductase that uses light energy to abstract electrons from H(2)O, generating O(2) and a proton gradient subsequently used for ATP formation. It consists of a core antenna complex that captures photons, and an electron transfer chain that converts photonic excitation into a charge separation. The chain is Cytochrome b559 subunit alpha from Synechocystis sp. (strain ATCC 27184 / PCC 6803 / Kazusa).